A 400-amino-acid chain; its full sequence is Enoyl-[acyl-carrier-protein] reductase [NADH] (400 aa).

NAD(+)-binding positions include 48–53, 74–75, 111–112, and 139–140; these read GASTGY, FE, DA, and LA. Tyr-225 serves as a coordination point for substrate. Tyr-235 (proton donor) is an active-site residue. NAD(+) is bound by residues Lys-244 and 273-275; that span reads VVT.

It belongs to the TER reductase family. In terms of assembly, monomer.

The catalysed reaction is a 2,3-saturated acyl-[ACP] + NAD(+) = a (2E)-enoyl-[ACP] + NADH + H(+). It participates in lipid metabolism; fatty acid biosynthesis. In terms of biological role, involved in the final reduction of the elongation cycle of fatty acid synthesis (FAS II). Catalyzes the reduction of a carbon-carbon double bond in an enoyl moiety that is covalently linked to an acyl carrier protein (ACP). This is Enoyl-[acyl-carrier-protein] reductase [NADH] from Burkholderia ambifaria (strain MC40-6).